Reading from the N-terminus, the 809-residue chain is Phenylalanine--tRNA ligase beta subunit (809 aa).

The tRNA-binding domain occupies Ala-39–Arg-153. In terms of domain architecture, B5 spans Pro-404–Ala-479. Residues Asp-457, Asp-463, Glu-466, and Glu-467 each contribute to the Mg(2+) site. One can recognise an FDX-ACB domain in the interval Pro-706–Arg-808.

Belongs to the phenylalanyl-tRNA synthetase beta subunit family. Type 1 subfamily. In terms of assembly, tetramer of two alpha and two beta subunits. It depends on Mg(2+) as a cofactor.

It is found in the cytoplasm. The catalysed reaction is tRNA(Phe) + L-phenylalanine + ATP = L-phenylalanyl-tRNA(Phe) + AMP + diphosphate + H(+). The sequence is that of Phenylalanine--tRNA ligase beta subunit from Ralstonia nicotianae (strain ATCC BAA-1114 / GMI1000) (Ralstonia solanacearum).